Here is a 269-residue protein sequence, read N- to C-terminus: Diadenylate cyclase (269 aa).

The 158-residue stretch at Arg109–Pro266 folds into the DAC domain.

It belongs to the adenylate cyclase family. DacZ subfamily. It depends on Mn(2+) as a cofactor.

The enzyme catalyses 2 ATP = 3',3'-c-di-AMP + 2 diphosphate. Its function is as follows. Diadenylate cyclase that catalyzes the condensation of 2 ATP molecules into cyclic di-AMP (c-di-AMP). c-di-AMP is a second messenger for intracellular signal transduction involved in the control of important regulatory processes such as osmoregulation. Is essential for H.volcanii. Overexpression of DacZ leads to cell death, suggesting the need for tight regulation of c-di-AMP levels. Cannot use GTP as substrate. This Haloferax volcanii (strain ATCC 29605 / DSM 3757 / JCM 8879 / NBRC 14742 / NCIMB 2012 / VKM B-1768 / DS2) (Halobacterium volcanii) protein is Diadenylate cyclase.